We begin with the raw amino-acid sequence, 536 residues long: Enterobactin synthase component E (536 aa).

Substrate is bound by residues Asn235, Ser240, Gly309, Val331, Ala335, Asp415, and Lys432. The segment at 438-439 (GG) is phosphopantetheine binding. Lys441 is a substrate binding site.

It belongs to the ATP-dependent AMP-binding enzyme family. EntE subfamily. As to quaternary structure, proteins EntB, EntD, EntE, and EntF form a multienzyme complex called enterobactin synthase. Monomer. EntA and EntE interact together.

It localises to the membrane. It catalyses the reaction 3 2,3-dihydroxybenzoate + 3 L-serine + 6 ATP = enterobactin + 6 AMP + 6 diphosphate + 4 H(+). The enzyme catalyses 2,3-dihydroxybenzoate + holo-[ACP] + ATP = 2,3-dihydroxybenzoyl-[ACP] + AMP + diphosphate. It carries out the reaction 2,3-dihydroxybenzoyl-5'-AMP + holo-[ACP] = 2,3-dihydroxybenzoyl-[ACP] + AMP + H(+). It functions in the pathway siderophore biosynthesis; enterobactin biosynthesis. Inhibited by the adenylate analogs, 5'-O-[N-(salicyl)sulfamoyl]adenosine (Sal-AMS) and 5'-O-[N-(2,3-dihydroxybenzoyl)sulfamoyl]adenosine (DHB-AMS). Adenylation of 2,3-dihydroxybenzoate (DHB) is enhanced by a protein-protein interaction between the EntA and EntE. In terms of biological role, involved in the biosynthesis of the siderophore enterobactin (enterochelin), which is a macrocyclic trimeric lactone of N-(2,3-dihydroxybenzoyl)-serine. The serine trilactone serves as a scaffolding for the three catechol functionalities that provide hexadentate coordination for the tightly ligated iron(2+) atoms. EntE processes via a two-step adenylation-ligation reaction (bi-uni-uni-bi ping-pong mechanism). First, it catalyzes the activation of the carboxylate group of 2,3-dihydroxy-benzoate (DHB), via a reversible ATP-dependent pyrophosphate exchange reactions to yield the acyladenylate intermediate 2,3-dihydroxybenzoyl-AMP. It can also transfer AMP to salicylate, 2,4-dihydroxybenzoate, gentisate and 2,3,4-trihydroxybenzoate. In the second step, DHB is transferred from 2,3-dihydroxybenzoyl-AMP onto the phosphopantetheinylated EntB (holo-EntB) to form DHB-holo-EntB. Then this product will serve in the formation of the amide bond between 2,3-dihydroxybenzoate (DHB) and L-serine. It can also transfer adenylated salicylate to holo-EntB. In Escherichia coli (strain K12), this protein is Enterobactin synthase component E.